Reading from the N-terminus, the 121-residue chain is Small ribosomal subunit protein uS13 (121 aa).

A disordered region spans residues 97 to 121 (VRGQRTRTNARTRRGARKTVAGKKK). The span at 100–121 (QRTRTNARTRRGARKTVAGKKK) shows a compositional bias: basic residues.

The protein belongs to the universal ribosomal protein uS13 family. In terms of assembly, part of the 30S ribosomal subunit. Forms a loose heterodimer with protein S19. Forms two bridges to the 50S subunit in the 70S ribosome.

Its function is as follows. Located at the top of the head of the 30S subunit, it contacts several helices of the 16S rRNA. In the 70S ribosome it contacts the 23S rRNA (bridge B1a) and protein L5 of the 50S subunit (bridge B1b), connecting the 2 subunits; these bridges are implicated in subunit movement. Contacts the tRNAs in the A and P-sites. The protein is Small ribosomal subunit protein uS13 of Synechococcus sp. (strain CC9311).